The following is a 473-amino-acid chain: 3-isopropylmalate dehydratase large subunit 2 (473 aa).

[4Fe-4S] cluster is bound by residues C350, C410, and C413.

It belongs to the aconitase/IPM isomerase family. LeuC type 1 subfamily. In terms of assembly, heterodimer of LeuC and LeuD. Requires [4Fe-4S] cluster as cofactor.

The enzyme catalyses (2R,3S)-3-isopropylmalate = (2S)-2-isopropylmalate. It functions in the pathway amino-acid biosynthesis; L-leucine biosynthesis; L-leucine from 3-methyl-2-oxobutanoate: step 2/4. Its function is as follows. Catalyzes the isomerization between 2-isopropylmalate and 3-isopropylmalate, via the formation of 2-isopropylmaleate. The protein is 3-isopropylmalate dehydratase large subunit 2 of Salmonella choleraesuis (strain SC-B67).